Consider the following 159-residue polypeptide: Endoribonuclease YbeY (159 aa).

The Zn(2+) site is built by His-125, His-129, and His-135.

The protein belongs to the endoribonuclease YbeY family. Zn(2+) is required as a cofactor.

It localises to the cytoplasm. In terms of biological role, single strand-specific metallo-endoribonuclease involved in late-stage 70S ribosome quality control and in maturation of the 3' terminus of the 16S rRNA. The sequence is that of Endoribonuclease YbeY from Thermoanaerobacter pseudethanolicus (strain ATCC 33223 / 39E) (Clostridium thermohydrosulfuricum).